Consider the following 335-residue polypeptide: Fructose-1,6-bisphosphatase class 1 (335 aa).

Mg(2+) contacts are provided by E94, D113, L115, and D116. Substrate contacts are provided by residues 116–119, N208, and K274; that span reads DGSS. Mg(2+) is bound at residue E280.

Belongs to the FBPase class 1 family. As to quaternary structure, homotetramer. Requires Mg(2+) as cofactor.

It is found in the cytoplasm. It catalyses the reaction beta-D-fructose 1,6-bisphosphate + H2O = beta-D-fructose 6-phosphate + phosphate. The protein operates within carbohydrate biosynthesis; gluconeogenesis. This chain is Fructose-1,6-bisphosphatase class 1, found in Polynucleobacter asymbioticus (strain DSM 18221 / CIP 109841 / QLW-P1DMWA-1) (Polynucleobacter necessarius subsp. asymbioticus).